The primary structure comprises 363 residues: Spermidine/putrescine import ATP-binding protein PotA (363 aa).

Residues 9–239 enclose the ABC transporter domain; it reads IDVRNAVKRY…PANRFVADFI (231 aa). 41–48 contributes to the ATP binding site; sequence GPSGCGKT.

It belongs to the ABC transporter superfamily. Spermidine/putrescine importer (TC 3.A.1.11.1) family. As to quaternary structure, the complex is composed of two ATP-binding proteins (PotA), two transmembrane proteins (PotB and PotC) and a solute-binding protein (PotD).

It localises to the cell inner membrane. The catalysed reaction is ATP + H2O + polyamine-[polyamine-binding protein]Side 1 = ADP + phosphate + polyamineSide 2 + [polyamine-binding protein]Side 1.. Its function is as follows. Part of the ABC transporter complex PotABCD involved in spermidine/putrescine import. Responsible for energy coupling to the transport system. This Roseobacter denitrificans (strain ATCC 33942 / OCh 114) (Erythrobacter sp. (strain OCh 114)) protein is Spermidine/putrescine import ATP-binding protein PotA.